The sequence spans 200 residues: ATP synthase subunit s, mitochondrial (200 aa).

The N-terminal 25 residues, 1 to 25, are a transit peptide targeting the mitochondrion; sequence MMLFGKVSQQLCGIKKLPWSCDSRY. The interval 1-61 is N-terminal domain; it reads MMLFGKVSQQ…SEWLLRCGAM (61 aa). Gly59 is a binding site for Mg(2+). LRR repeat units lie at residues 62–87, 88–116, 117–141, and 142–173; these read VRYH…KYKI, QAID…KIRL, CKCH…KSIL, and EMEI…LSDL. Thr93 serves as a coordination point for Mg(2+).

This sequence belongs to the ATP synthase subunit s family. As to quaternary structure, homotetramer. Associates with ATP synthase.

It localises to the mitochondrion. The protein resides in the mitochondrion inner membrane. Involved in regulation of mitochondrial membrane ATP synthase. Necessary for H(+) conduction of ATP synthase. Facilitates energy-driven catalysis of ATP synthesis by blocking a proton leak through an alternative proton exit pathway. This Macaca fascicularis (Crab-eating macaque) protein is ATP synthase subunit s, mitochondrial (DMAC2L).